The sequence spans 123 residues: Small ribosomal subunit protein bS16 (123 aa).

The interval 87-123 (AKNNPIKAKPGKRAQERAAEKAQKAADAAAAAADAAE) is disordered. The segment covering 99 to 110 (RAQERAAEKAQK) has biased composition (basic and acidic residues). Low complexity predominate over residues 111–123 (AADAAAAAADAAE).

Belongs to the bacterial ribosomal protein bS16 family.

This Rhizobium etli (strain CIAT 652) protein is Small ribosomal subunit protein bS16.